Consider the following 520-residue polypeptide: Cytochrome P450 4F3 (520 aa).

Residues 11–31 form a helical membrane-spanning segment; the sequence is LWPMAASPWLLLLLVGASWLL. Positions 328 and 468 each coordinate heme.

The protein belongs to the cytochrome P450 family. It depends on heme as a cofactor. Selectively expressed in blood neutrophils and bone marrow cells. Coexpressed with CYP4F3B in prostate, ileum and trachea. In terms of tissue distribution, selectively expressed in liver and kidney. It is also the predominant CYP4F isoform in trachea and tissues of the gastrointestinal tract.

The protein localises to the endoplasmic reticulum membrane. The protein resides in the microsome membrane. It catalyses the reaction an organic molecule + reduced [NADPH--hemoprotein reductase] + O2 = an alcohol + oxidized [NADPH--hemoprotein reductase] + H2O + H(+). The enzyme catalyses leukotriene B4 + reduced [NADPH--hemoprotein reductase] + O2 = 20-hydroxy-leukotriene B4 + oxidized [NADPH--hemoprotein reductase] + H2O + H(+). The catalysed reaction is 20-hydroxy-leukotriene B4 + reduced [NADPH--hemoprotein reductase] + O2 = 20-oxo-leukotriene B4 + oxidized [NADPH--hemoprotein reductase] + 2 H2O + H(+). It carries out the reaction 20-oxo-leukotriene B4 + reduced [NADPH--hemoprotein reductase] + O2 = 20-carboxy-leukotriene B4 + oxidized [NADPH--hemoprotein reductase] + H2O + 2 H(+). It catalyses the reaction (5Z,8Z,11Z)-eicosatrienoate + reduced [NADPH--hemoprotein reductase] + O2 = 20-hydroxy-(5Z,8Z,11Z)-eicosatrienoate + oxidized [NADPH--hemoprotein reductase] + H2O + H(+). The enzyme catalyses (5Z,8Z,11Z,14Z)-eicosatetraenoate + reduced [NADPH--hemoprotein reductase] + O2 = 20-hydroxy-(5Z,8Z,11Z,14Z)-eicosatetraenoate + oxidized [NADPH--hemoprotein reductase] + H2O + H(+). The catalysed reaction is (5Z,8Z,11Z,14Z,17Z)-eicosapentaenoate + reduced [NADPH--hemoprotein reductase] + O2 = 19-hydroxy-(5Z,8Z,11Z,14Z,17Z)-eicosapentaenoate + oxidized [NADPH--hemoprotein reductase] + H2O + H(+). It carries out the reaction (5Z,8Z,11Z,14Z,17Z)-eicosapentaenoate + reduced [NADPH--hemoprotein reductase] + O2 = 20-hydroxy-(5Z,8Z,11Z,14Z,17Z)-eicosapentaenoate + oxidized [NADPH--hemoprotein reductase] + H2O + H(+). It catalyses the reaction (4Z,7Z,10Z,13Z,16Z,19Z)-docosahexaenoate + reduced [NADPH--hemoprotein reductase] + O2 = 21-hydroxy-(4Z,7Z,10Z,13Z,16Z,19Z)-docosahexaenoate + oxidized [NADPH--hemoprotein reductase] + H2O + H(+). The enzyme catalyses (4Z,7Z,10Z,13Z,16Z,19Z)-docosahexaenoate + reduced [NADPH--hemoprotein reductase] + O2 = 22-hydroxy-(4Z,7Z,10Z,13Z,16Z,19Z)-docosahexaenoate + oxidized [NADPH--hemoprotein reductase] + H2O + H(+). The catalysed reaction is 8,9-epoxy-(5Z,11Z,14Z)-eicosatrienoate + reduced [NADPH--hemoprotein reductase] + O2 = 20-hydroxy-8,9-epoxy-(5Z,11Z,14Z)-eicosatrienoate + oxidized [NADPH--hemoprotein reductase] + H2O + H(+). It carries out the reaction 11,12-epoxy-(5Z,8Z,14Z)-eicosatrienoate + reduced [NADPH--hemoprotein reductase] + O2 = 20-hydroxy-11,12-epoxy-(5Z,8Z,14Z)-eicosatrienoate + oxidized [NADPH--hemoprotein reductase] + H2O + H(+). It catalyses the reaction 14,15-epoxy-(5Z,8Z,11Z)-eicosatrienoate + reduced [NADPH--hemoprotein reductase] + O2 = 20-hydroxy-14,15-epoxy-(5Z,8Z,11Z)-eicosatrienoate + oxidized [NADPH--hemoprotein reductase] + H2O + H(+). The enzyme catalyses 12,13-epoxy-(9Z)-octadecenoate + reduced [NADPH--hemoprotein reductase] + O2 = 18-hydroxy-12,13-epoxy-(9Z)-octadecenoate + oxidized [NADPH--hemoprotein reductase] + H2O + H(+). The catalysed reaction is 9,10-epoxy-(12Z)-octadecenoate + reduced [NADPH--hemoprotein reductase] + O2 = 18-hydroxy-9,10-epoxy-(12Z)-octadecenoate + oxidized [NADPH--hemoprotein reductase] + H2O + H(+). It carries out the reaction 9,10-epoxyoctadecanoate + reduced [NADPH--hemoprotein reductase] + O2 = 18-hydroxy-9,10-epoxy-octadecanoate + oxidized [NADPH--hemoprotein reductase] + H2O + H(+). It catalyses the reaction (12R)-hydroxy-(9Z)-octadecenoate + reduced [NADPH--hemoprotein reductase] + O2 = (12R),18-dihydroxy-(9Z)-octadecenoate + oxidized [NADPH--hemoprotein reductase] + H2O + H(+). The enzyme catalyses 12-hydroxyoctadecanoate + reduced [NADPH--hemoprotein reductase] + O2 = 12,18-dihydroxyoctadecanoate + oxidized [NADPH--hemoprotein reductase] + H2O + H(+). The catalysed reaction is 5-hydroxy-(6E,8Z,11Z,14Z)-eicosatetraenoate + reduced [NADPH--hemoprotein reductase] + O2 = 5,20-dihydroxy-(6E,8Z,11Z,14Z)-eicosatetraenoate + oxidized [NADPH--hemoprotein reductase] + H2O + H(+). It carries out the reaction 8-hydroxy-(5Z,9E,11Z,14Z)-eicosatetraenoate + reduced [NADPH--hemoprotein reductase] + O2 = 8,20-dihydroxy-(5Z,9E,11Z,14Z)-eicosatetraenoate + oxidized [NADPH--hemoprotein reductase] + H2O + H(+). It catalyses the reaction 12-hydroxy-(5Z,8Z,10E,14Z)-eicosatetraenoate + reduced [NADPH--hemoprotein reductase] + O2 = 12,20-dihydroxy-(5Z,8Z,10E,14Z)-eicosatetraenoate + oxidized [NADPH--hemoprotein reductase] + H2O + H(+). The enzyme catalyses 5-hydroxy-(6E,8Z,11Z,14Z,17Z)-eicosapentaenoate + reduced [NADPH--hemoprotein reductase] + O2 = 5,20-dihydroxy-(6E,8Z,11Z,14Z,17Z)-eicosapentaenoate + oxidized [NADPH--hemoprotein reductase] + H2O + H(+). The catalysed reaction is lipoxin A4 + reduced [NADPH--hemoprotein reductase] + O2 = 20-hydroxy-lipoxin A4 + oxidized [NADPH--hemoprotein reductase] + H2O + H(+). It carries out the reaction lipoxin B4 + reduced [NADPH--hemoprotein reductase] + O2 = 20-hydroxy-lipoxin B4 + oxidized [NADPH--hemoprotein reductase] + H2O + H(+). It catalyses the reaction 22-hydroxydocosanoate + reduced [NADPH--hemoprotein reductase] + O2 = 22-oxodocosanoate + oxidized [NADPH--hemoprotein reductase] + 2 H2O + H(+). The enzyme catalyses 22-oxodocosanoate + reduced [NADPH--hemoprotein reductase] + O2 = docosanedioate + oxidized [NADPH--hemoprotein reductase] + H2O + 2 H(+). The catalysed reaction is docosanoate + reduced [NADPH--hemoprotein reductase] + O2 = 22-hydroxydocosanoate + oxidized [NADPH--hemoprotein reductase] + H2O + H(+). It carries out the reaction tetracosanoate + reduced [NADPH--hemoprotein reductase] + O2 = 24-hydroxytetracosanoate + oxidized [NADPH--hemoprotein reductase] + H2O + H(+). It catalyses the reaction hexacosanoate + reduced [NADPH--hemoprotein reductase] + O2 = 26-hydroxyhexacosanoate + oxidized [NADPH--hemoprotein reductase] + H2O + H(+). The enzyme catalyses 26-hydroxyhexacosanoate + reduced [NADPH--hemoprotein reductase] + O2 = 26-oxohexacosanoate + oxidized [NADPH--hemoprotein reductase] + 2 H2O + H(+). The catalysed reaction is 26-oxohexacosanoate + reduced [NADPH--hemoprotein reductase] + O2 = hexacosanedioate + oxidized [NADPH--hemoprotein reductase] + H2O + 2 H(+). It carries out the reaction 3-hydroxyoctadecanoate + reduced [NADPH--hemoprotein reductase] + O2 = 3,18-dihydroxyoctadecanoate + oxidized [NADPH--hemoprotein reductase] + H2O + H(+). It catalyses the reaction 3-hydroxyhexadecanoate + reduced [NADPH--hemoprotein reductase] + O2 = 3,16-dihydroxyhexadecanoate + oxidized [NADPH--hemoprotein reductase] + H2O + H(+). It participates in lipid metabolism; leukotriene B4 degradation. It functions in the pathway lipid metabolism; arachidonate metabolism. With respect to regulation, inhibited by carbon monoxide (CO). A cytochrome P450 monooxygenase involved in the metabolism of various endogenous substrates, including fatty acids and their oxygenated derivatives (oxylipins). Mechanistically, uses molecular oxygen inserting one oxygen atom into a substrate, and reducing the second into a water molecule, with two electrons provided by NADPH via cytochrome P450 reductase (CPR; NADPH-ferrihemoprotein reductase). May play a role in inactivation of pro-inflammatory and anti-inflammatory oxylipins during the resolution of inflammation. Its function is as follows. Catalyzes predominantly the oxidation of the terminal carbon (omega-oxidation) of oxylipins in myeloid cells, displaying higher affinity for arachidonate metabolite leukotriene B4 (LTB4). Inactivates LTB4 via three successive oxidative transformations to 20-hydroxy-LTB4, then to 20-oxo-LTB4 and to 20-carboxy-LTB4. Has omega-hydroxylase activity toward long-chain fatty acid epoxides with preference for 8,9-epoxy-(5Z,11Z,14Z)-eicosatrienoate (EET) and 9,10-epoxyoctadecanoate. Omega-hydroxylates monohydroxy polyunsaturated fatty acids (PUFAs), including hydroxyeicosatetraenoates (HETEs) and hydroxyeicosapentaenoates (HEPEs), to dihydroxy compounds. Contributes to the degradation of saturated very long-chain fatty acids (VLCFAs) such as docosanoic acid, by catalyzing successive omega-oxidations to the corresponding dicarboxylic acid, thereby initiating chain shortening. Has low hydroxylase activity toward PUFAs. In terms of biological role, catalyzes predominantly the oxidation of the terminal carbon (omega-oxidation) of polyunsaturated fatty acids (PUFAs). Participates in the conversion of arachidonic acid to 20-hydroxyeicosatetraenoic acid (20-HETE), a signaling molecule acting both as vasoconstrictive and natriuretic with overall effect on arterial blood pressure. Has high omega-hydroxylase activity toward other PUFAs, including eicosatrienoic acid (ETA), eicosapentaenoic acid (EPA) and docosahexaenoic acid (DHA). Can also catalyze the oxidation of the penultimate carbon (omega-1 oxidation) of PUFAs with lower efficiency. Contributes to the degradation of saturated very long-chain fatty acids (VLCFAs) such as docosanoic acid and hexacosanoic acid, by catalyzing successive omega-oxidations to the corresponding dicarboxylic acids, thereby initiating chain shortening. Omega-hydroxylates long-chain 3-hydroxy fatty acids, likely initiating the oxidative conversion to the corresponding 3-hydroxydicarboxylic fatty acids. Has omega-hydroxylase activity toward long-chain fatty acid epoxides with preference for 8,9-epoxy-(5Z,11Z,14Z)-eicosatrienoate (EET) and 9,10-epoxyoctadecanoate. In Homo sapiens (Human), this protein is Cytochrome P450 4F3.